A 202-amino-acid polypeptide reads, in one-letter code: Dephospho-CoA kinase (202 aa).

The 197-residue stretch at 6 to 202 (KISVTGDPSS…QCFKALKGTI (197 aa)) folds into the DPCK domain. 14–19 (SSGKTE) contributes to the ATP binding site.

It belongs to the CoaE family.

It is found in the cytoplasm. It catalyses the reaction 3'-dephospho-CoA + ATP = ADP + CoA + H(+). It participates in cofactor biosynthesis; coenzyme A biosynthesis; CoA from (R)-pantothenate: step 5/5. Its function is as follows. Catalyzes the phosphorylation of the 3'-hydroxyl group of dephosphocoenzyme A to form coenzyme A. The sequence is that of Dephospho-CoA kinase from Chlamydia muridarum (strain MoPn / Nigg).